We begin with the raw amino-acid sequence, 125 residues long: RutC family protein aq_364 (125 aa).

Belongs to the RutC family.

The polypeptide is RutC family protein aq_364 (Aquifex aeolicus (strain VF5)).